The chain runs to 971 residues: DNA replication licensing factor MCM3 (971 aa).

The segment at 52–78 is disordered; sequence NAANYNDDQDDADERDLLGDDDGDDLE. Residues 58-77 show a composition bias toward acidic residues; the sequence is DDQDDADERDLLGDDDGDDL. Residues 359–566 enclose the MCM domain; sequence IFDILSQSLA…RDRSISEHVL (208 aa). 409–416 contributes to the ATP binding site; that stretch reads GDPSTAKS. The Arginine finger signature appears at 541 to 544; the sequence is SRFD. Disordered stretches follow at residues 594 to 614, 749 to 825, and 842 to 893; these read EDAD…ENEG, EESE…IMSP, and LRVS…FDNV. 3 positions are modified to phosphoserine: Ser-761, Ser-777, and Ser-781. Over residues 761-772 the composition is skewed to basic residues; that stretch reads SPQKSPKKRQRV. Polar residues predominate over residues 775–801; it reads PASNSGSPIKSTPRRSTASSVNATPSS. The segment covering 811-821 has biased composition (acidic residues); that stretch reads DEQNAGEDDND. At Thr-868 the chain carries Phosphothreonine. The span at 873–889 shows a compositional bias: polar residues; sequence NVSSAGQDDEQQQSVIS.

Belongs to the MCM family. In terms of assembly, component of the MCM2-7 complex. The complex forms a toroidal hexameric ring with the proposed subunit order MCM2-MCM6-MCM4-MCM7-MCM3-MCM5; loaded onto DNA, forms a head-head double hexamer. Interacts with CSM1.

It localises to the nucleus. It carries out the reaction ATP + H2O = ADP + phosphate + H(+). Acts as a component of the MCM2-7 complex (MCM complex) which is the putative replicative helicase essential for 'once per cell cycle' DNA replication initiation and elongation in eukaryotic cells. The active ATPase sites in the MCM2-7 ring are formed through the interaction surfaces of two neighboring subunits such that a critical structure of a conserved arginine finger motif is provided in trans relative to the ATP-binding site of the Walker A box of the adjacent subunit. The six ATPase active sites, however, are likely to contribute differentially to the complex helicase activity. Once loaded onto DNA, double hexamers can slide on dsDNA in the absence of ATPase activity. Necessary for cell growth. This is DNA replication licensing factor MCM3 (MCM3) from Saccharomyces cerevisiae (strain ATCC 204508 / S288c) (Baker's yeast).